Reading from the N-terminus, the 629-residue chain is Ionotropic receptor 75a (629 aa).

Residues 1–335 (MQLVQLANFV…GDVFLQPFSP (335 aa)) are Extracellular-facing. 6 N-linked (GlcNAc...) asparagine glycosylation sites follow: asparagine 61, asparagine 112, asparagine 126, asparagine 144, asparagine 166, and asparagine 232. A helical membrane pass occupies residues 336–356 (LVWYLFGGVLSLIGVLLWITF). At 357–374 (YMECKRMQKRWRLDYLPS) the chain is on the cytoplasmic side. A helical membrane pass occupies residues 375–395 (LLSTFLISFGAACIQSSSLIP). Topologically, residues 396 to 402 (RSAGGRL) are extracellular. A helical transmembrane segment spans residues 403 to 423 (IYFALFLISFIMYNYYTSVVV). Residues 424 to 592 (SSLLSSPVKS…NFVITVGMEY (169 aa)) lie on the Cytoplasmic side of the membrane. Residues 593–613 (VAPLLLMLICADILVVVILLV) form a helical membrane-spanning segment. The Extracellular segment spans residues 614 to 629 (ELAWKRFFTRPLTIHP).

It belongs to the glutamate-gated ion channel (TC 1.A.10.1) family. As to expression, expressed in neurons in the antennal coeloconic 2 (ac2) sensillum class of sensory hairs (at protein level).

The protein resides in the cell membrane. It localises to the cell projection. The protein localises to the dendrite. In terms of biological role, olfactory receptor for propionic, butyric and 2-oxopentanoic acids. The protein is Ionotropic receptor 75a of Drosophila sechellia (Fruit fly).